The primary structure comprises 60 residues: Large ribosomal subunit protein uL30 (60 aa).

Belongs to the universal ribosomal protein uL30 family. As to quaternary structure, part of the 50S ribosomal subunit.

This chain is Large ribosomal subunit protein uL30, found in Leuconostoc mesenteroides subsp. mesenteroides (strain ATCC 8293 / DSM 20343 / BCRC 11652 / CCM 1803 / JCM 6124 / NCDO 523 / NBRC 100496 / NCIMB 8023 / NCTC 12954 / NRRL B-1118 / 37Y).